The sequence spans 88 residues: Phosphocarrier protein HPr (88 aa).

Residues 1–88 (MVVKTVRVLN…RLFQNKFEEE (88 aa)) form the HPr domain. The Pros-phosphohistidine intermediate role is filled by histidine 15. Serine 46 is subject to Phosphoserine; by HPrK/P.

It belongs to the HPr family.

It localises to the cytoplasm. With respect to regulation, phosphorylation on Ser-46 inhibits the phosphoryl transfer from enzyme I to HPr. General (non sugar-specific) component of the phosphoenolpyruvate-dependent sugar phosphotransferase system (sugar PTS). This major carbohydrate active-transport system catalyzes the phosphorylation of incoming sugar substrates concomitantly with their translocation across the cell membrane. The phosphoryl group from phosphoenolpyruvate (PEP) is transferred to the phosphoryl carrier protein HPr by enzyme I. Phospho-HPr then transfers it to the PTS EIIA domain. The polypeptide is Phosphocarrier protein HPr (ptsH) (Treponema pallidum (strain Nichols)).